The chain runs to 444 residues: 3-phosphoshikimate 1-carboxyvinyltransferase (444 aa).

Positions 24, 25, and 29 each coordinate 3-phosphoshikimate. Phosphoenolpyruvate is bound at residue Lys24. Positions 97 and 125 each coordinate phosphoenolpyruvate. Positions 170, 172, 318, and 345 each coordinate 3-phosphoshikimate. Gln172 serves as a coordination point for phosphoenolpyruvate. Asp318 serves as the catalytic Proton acceptor. Residues Arg349 and Arg391 each coordinate phosphoenolpyruvate.

This sequence belongs to the EPSP synthase family. As to quaternary structure, monomer.

Its subcellular location is the cytoplasm. The catalysed reaction is 3-phosphoshikimate + phosphoenolpyruvate = 5-O-(1-carboxyvinyl)-3-phosphoshikimate + phosphate. It functions in the pathway metabolic intermediate biosynthesis; chorismate biosynthesis; chorismate from D-erythrose 4-phosphate and phosphoenolpyruvate: step 6/7. In terms of biological role, catalyzes the transfer of the enolpyruvyl moiety of phosphoenolpyruvate (PEP) to the 5-hydroxyl of shikimate-3-phosphate (S3P) to produce enolpyruvyl shikimate-3-phosphate and inorganic phosphate. In Halorhodospira halophila (strain DSM 244 / SL1) (Ectothiorhodospira halophila (strain DSM 244 / SL1)), this protein is 3-phosphoshikimate 1-carboxyvinyltransferase.